A 450-amino-acid polypeptide reads, in one-letter code: tRNA modification GTPase MnmE (450 aa).

(6S)-5-formyl-5,6,7,8-tetrahydrofolate contacts are provided by Arg25, Glu86, and Arg126. One can recognise a TrmE-type G domain in the interval 221–373 (GLRVALVGRP…LVQALLERCG (153 aa)). Residue Asn231 coordinates K(+). Residues 231-236 (NVGKSS), 250-256 (TELPGTT), 275-278 (DTAG), and 336-339 (NKAD) each bind GTP. Ser235 is a binding site for Mg(2+). Positions 250, 252, and 255 each coordinate K(+). A Mg(2+)-binding site is contributed by Thr256. Lys450 contributes to the (6S)-5-formyl-5,6,7,8-tetrahydrofolate binding site.

It belongs to the TRAFAC class TrmE-Era-EngA-EngB-Septin-like GTPase superfamily. TrmE GTPase family. Homodimer. Heterotetramer of two MnmE and two MnmG subunits. K(+) is required as a cofactor.

Its subcellular location is the cytoplasm. Its function is as follows. Exhibits a very high intrinsic GTPase hydrolysis rate. Involved in the addition of a carboxymethylaminomethyl (cmnm) group at the wobble position (U34) of certain tRNAs, forming tRNA-cmnm(5)s(2)U34. This is tRNA modification GTPase MnmE from Parasynechococcus marenigrum (strain WH8102).